Reading from the N-terminus, the 247-residue chain is 3-deoxy-manno-octulosonate cytidylyltransferase (247 aa).

This sequence belongs to the KdsB family.

It is found in the cytoplasm. The catalysed reaction is 3-deoxy-alpha-D-manno-oct-2-ulosonate + CTP = CMP-3-deoxy-beta-D-manno-octulosonate + diphosphate. It functions in the pathway nucleotide-sugar biosynthesis; CMP-3-deoxy-D-manno-octulosonate biosynthesis; CMP-3-deoxy-D-manno-octulosonate from 3-deoxy-D-manno-octulosonate and CTP: step 1/1. It participates in bacterial outer membrane biogenesis; lipopolysaccharide biosynthesis. Activates KDO (a required 8-carbon sugar) for incorporation into bacterial lipopolysaccharide in Gram-negative bacteria. The polypeptide is 3-deoxy-manno-octulosonate cytidylyltransferase (Bdellovibrio bacteriovorus (strain ATCC 15356 / DSM 50701 / NCIMB 9529 / HD100)).